A 926-amino-acid polypeptide reads, in one-letter code: MVDRLKLLQAISTSAKDLASFALSRGASPIPQPVGLTDVTFDPLPLPDLNALHRRLKDAGLPPKTTKSAIKAYDEACSRWRSTVDESFKATASAVSPRNLHLLLSLRHHVYAQQVQKWLWQVLQVPELWKAEMAKQRAHITATMDTYKKPRPKFHSEYTPLLELYFHFNAYPTFADRRMLAEKTGMQTRQITVWFQNHRRRAKGPLPRMAPTDKIPMEEFERQRENMARKLLPVLLPSHLRPAPSGSENASPARSIPRATMSAAKSKKPDGDKEALRKVGKKALRDAAKTAKANSSTVLGALVAAGVQQAPEAKNSKKAKKAARKNAQDVEMRDATKSHEKRRKTKAMPRPAGQVPMDVDGRAHKKSTKTTSSAFDSKAELAFARMAYPAPSPYAWVHTAPKSSHVMPSAPFKDAHISDIRKLGKGKPSQNLTSTPATFSTVPPRRTSSRLNAMRPPYAFPATYDSASVPMTFAAAQTLRFSFVTDSQAFGFRQRYPLSVGEKVHSGAIDALTRRFESLRVLCAEFSTPKKQTSSFERQTLCRLRAEGLKAGEIEVRHLVAADSYAARRAITYVTPRAPLDSVVVDLPRALQLRLVKPLVPAEPIVRPDDFAPFVALAEKRAKRRARKEKKKQAEKEARKEEKRARKEAKQAKKDRKEQRAGLPRRSPSTLDSSRASSVTSDASATSRKSRTSRKPRDSSASSVASARTPSLSSTSSRRSSGTSMPATPRMNESLPVVASDNFVLGTDKDVTMTPELMAQLFGEDDASGLDEPMQSEGFSPDMLIFSSCNDGALGDMTADVNMPELGDLSDTQLSFDDMNWTSSMDLSTQPAASFDSSSETSSMDFNWLLPQCANTAPDWSALIGMTPSTTSQIHVLGGTYSCELGGTNTTNAPLNFADLSFELDAGEDCFINFDHNPLGGTMLAV.

The homeobox DNA-binding region spans 147-206; that stretch reads YKKPRPKFHSEYTPLLELYFHFNAYPTFADRRMLAEKTGMQTRQITVWFQNHRRRAKGPL. Disordered stretches follow at residues 238-281, 308-374, 424-452, and 625-734; these read SHLR…KVGK, QQAP…TSSA, GKGK…SRLN, and RARK…MNES. Composition is skewed to basic and acidic residues over residues 267-281 and 326-338; these read KKPD…KVGK and NAQD…ATKS. Positions 428-441 are enriched in polar residues; the sequence is PSQNLTSTPATFST. Residues 632-660 show a composition bias toward basic and acidic residues; the sequence is KQAEKEARKEEKRARKEAKQAKKDRKEQR. 2 stretches are compositionally biased toward low complexity: residues 669–687 and 699–724; these read STLD…SATS and SSAS…SGTS.

It localises to the nucleus. In terms of biological role, specifies A-alpha-3 mating-type. May regulate the expression of genes specific to the homokaryotic cell type. The chain is Mating-type protein A-alpha Y3 from Schizophyllum commune (Split gill fungus).